The following is a 352-amino-acid chain: Phenylalanine--tRNA ligase alpha subunit (352 aa).

Glu258 is a binding site for Mg(2+).

The protein belongs to the class-II aminoacyl-tRNA synthetase family. Phe-tRNA synthetase alpha subunit type 1 subfamily. As to quaternary structure, tetramer of two alpha and two beta subunits. Mg(2+) is required as a cofactor.

It is found in the cytoplasm. The catalysed reaction is tRNA(Phe) + L-phenylalanine + ATP = L-phenylalanyl-tRNA(Phe) + AMP + diphosphate + H(+). This is Phenylalanine--tRNA ligase alpha subunit from Staphylococcus aureus (strain Mu3 / ATCC 700698).